We begin with the raw amino-acid sequence, 284 residues long: MKLMVVSGSSGAGKSVALRVLEDLGYYCVDNLPIDLLTQFVESIQHSSQNVAVSVDIRNLPKDPALLKNTLALLKKTHDVTVIFLDAEDKELIKRYSETRRLHPLSLIGEQCSLEQAVTLEKSILSDYREEADLVLDTTTKSIHDLSETLRSRILGRESKELVMVFESFGFKHGLPTDADYVFDVRFLPNPHWEPSLRPMTGLDKPVADYLAKHTEVIQLKEQIQQFLTTWLPALEKNNRSYLTVAIGCTGGQHRSVYITQQLGEYFKQQGKQVQIRHKTLERH.

8 to 15 contributes to the ATP binding site; it reads GSSGAGKS. 56–59 contacts GTP; that stretch reads DIRN.

It belongs to the RapZ-like family.

Functionally, displays ATPase and GTPase activities. The chain is Nucleotide-binding protein VF_0384 from Aliivibrio fischeri (strain ATCC 700601 / ES114) (Vibrio fischeri).